Here is a 200-residue protein sequence, read N- to C-terminus: MIASVRGVVTATGPDHAVIEVGGVGLAVQCAPGTIADLRVGQPARLATSLVVREDSLTLYGFADDNAKALFELLQTASGVGPRLAQAVLAVHTPETVRAAIANADTAALTRVPGIGKKGAERLVLELRDRIGPVPVGGDGAAGVTTGAWPEQVRQALVGLGWTAGQAEQAVAAVAETVDGEVPPVPVLLRQAIRLLGRTR.

The interval 1–63 is domain I; it reads MIASVRGVVT…EDSLTLYGFA (63 aa). Residues 64–142 are domain II; the sequence is DDNAKALFEL…PVPVGGDGAA (79 aa). The segment at 143–151 is flexible linker; sequence GVTTGAWPE. Positions 151–200 are domain III; that stretch reads EQVRQALVGLGWTAGQAEQAVAAVAETVDGEVPPVPVLLRQAIRLLGRTR.

It belongs to the RuvA family. In terms of assembly, homotetramer. Forms an RuvA(8)-RuvB(12)-Holliday junction (HJ) complex. HJ DNA is sandwiched between 2 RuvA tetramers; dsDNA enters through RuvA and exits via RuvB. An RuvB hexamer assembles on each DNA strand where it exits the tetramer. Each RuvB hexamer is contacted by two RuvA subunits (via domain III) on 2 adjacent RuvB subunits; this complex drives branch migration. In the full resolvosome a probable DNA-RuvA(4)-RuvB(12)-RuvC(2) complex forms which resolves the HJ.

The protein resides in the cytoplasm. The RuvA-RuvB-RuvC complex processes Holliday junction (HJ) DNA during genetic recombination and DNA repair, while the RuvA-RuvB complex plays an important role in the rescue of blocked DNA replication forks via replication fork reversal (RFR). RuvA specifically binds to HJ cruciform DNA, conferring on it an open structure. The RuvB hexamer acts as an ATP-dependent pump, pulling dsDNA into and through the RuvAB complex. HJ branch migration allows RuvC to scan DNA until it finds its consensus sequence, where it cleaves and resolves the cruciform DNA. This Salinispora arenicola (strain CNS-205) protein is Holliday junction branch migration complex subunit RuvA.